The chain runs to 237 residues: Phosphoribosylaminoimidazole-succinocarboxamide synthase (237 aa).

Belongs to the SAICAR synthetase family.

The enzyme catalyses 5-amino-1-(5-phospho-D-ribosyl)imidazole-4-carboxylate + L-aspartate + ATP = (2S)-2-[5-amino-1-(5-phospho-beta-D-ribosyl)imidazole-4-carboxamido]succinate + ADP + phosphate + 2 H(+). It functions in the pathway purine metabolism; IMP biosynthesis via de novo pathway; 5-amino-1-(5-phospho-D-ribosyl)imidazole-4-carboxamide from 5-amino-1-(5-phospho-D-ribosyl)imidazole-4-carboxylate: step 1/2. The polypeptide is Phosphoribosylaminoimidazole-succinocarboxamide synthase (Klebsiella pneumoniae (strain 342)).